A 294-amino-acid polypeptide reads, in one-letter code: ATP synthase gamma chain (294 aa).

This sequence belongs to the ATPase gamma chain family. As to quaternary structure, F-type ATPases have 2 components, CF(1) - the catalytic core - and CF(0) - the membrane proton channel. CF(1) has five subunits: alpha(3), beta(3), gamma(1), delta(1), epsilon(1). CF(0) has three main subunits: a, b and c.

The protein resides in the cell inner membrane. Its function is as follows. Produces ATP from ADP in the presence of a proton gradient across the membrane. The gamma chain is believed to be important in regulating ATPase activity and the flow of protons through the CF(0) complex. The protein is ATP synthase gamma chain of Parvibaculum lavamentivorans (strain DS-1 / DSM 13023 / NCIMB 13966).